The chain runs to 214 residues: uncharacterized protein (214 aa).

A signal peptide spans 1–17; it reads MLKKIIILFLGVFVLSG. Residue Cys18 is the site of N-palmitoyl cysteine attachment. Residue Cys18 is the site of S-diacylglycerol cysteine attachment. Residues 64–77 are compositionally biased toward acidic residues; the sequence is DNLDDPEDDDDDYD. Disordered stretches follow at residues 64–83, 106–138, and 166–197; these read DNLD…LRGE, YKAE…KERK, and TANQ…SKVK. Positions 120-162 form a coiled coil; sequence TLSKANKKVRKDNTDKERKMQEELDQIKAMLRETKRDISKYTC.

It is found in the cell membrane. This is an uncharacterized protein from Rickettsia bellii (strain RML369-C).